A 37-amino-acid chain; its full sequence is Calcitonin gene-related peptide 1 (37 aa).

Cysteines 2 and 7 form a disulfide. At Phe-37 the chain carries Phenylalanine amide.

The protein belongs to the calcitonin family.

It is found in the secreted. CGRP1/CALCA is a peptide hormone that induces vasodilation mediated by the CALCRL-RAMP1 receptor complex. Dilates a variety of vessels including the coronary, cerebral and systemic vasculature. Its abundance in the CNS also points toward a neurotransmitter or neuromodulator role. It also elevates platelet cAMP. CGRP1 can also bind and activate CALCR-RAMP1 (AMYR1) receptor complex. This is Calcitonin gene-related peptide 1 (CALCA) from Sus scrofa (Pig).